The sequence spans 381 residues: Cytochrome b (381 aa).

A run of 4 helical transmembrane segments spans residues 34–54 (FGSLLVLCLAVQILTGLFLAM), 78–99 (WLIRNIHANGASLFFICIYLHI), 114–134 (WNIGVILLFLLMATAFVGYVL), and 179–199 (FFAFHFLLPFLIIALTMLHFL). Residues histidine 84 and histidine 98 each coordinate heme b. Heme b is bound by residues histidine 183 and histidine 197. Histidine 202 provides a ligand contact to a ubiquinone. A run of 4 helical transmembrane segments spans residues 227–247 (YKDILGFFTMTLFLGALVLFL), 289–309 (LGGVLALLFSILMLLLVPFLH), 321–341 (LTQLLFWTLVANTIILTWIGG), and 348–368 (FIFIGQIASITYFSLFLIITP).

The protein belongs to the cytochrome b family. In terms of assembly, the cytochrome bc1 complex contains 3 respiratory subunits (MT-CYB, CYC1 and UQCRFS1), 2 core proteins (UQCRC1 and UQCRC2) and probably 6 low-molecular weight proteins. Requires heme b as cofactor.

It localises to the mitochondrion inner membrane. In terms of biological role, component of the ubiquinol-cytochrome c reductase complex (complex III or cytochrome b-c1 complex) that is part of the mitochondrial respiratory chain. The b-c1 complex mediates electron transfer from ubiquinol to cytochrome c. Contributes to the generation of a proton gradient across the mitochondrial membrane that is then used for ATP synthesis. The protein is Cytochrome b (mt-cyb) of Heterodontus francisci (Horn shark).